The primary structure comprises 90 residues: RNA-binding protein Hfq (90 aa).

One can recognise a Sm domain in the interval 10 to 70 (DGFLNLLRRE…LSTITPARPL (61 aa)).

This sequence belongs to the Hfq family. As to quaternary structure, homohexamer.

Its function is as follows. RNA chaperone that binds small regulatory RNA (sRNAs) and mRNAs to facilitate mRNA translational regulation in response to envelope stress, environmental stress and changes in metabolite concentrations. Also binds with high specificity to tRNAs. In Symbiobacterium thermophilum (strain DSM 24528 / JCM 14929 / IAM 14863 / T), this protein is RNA-binding protein Hfq.